A 941-amino-acid chain; its full sequence is RNA-binding protein 4F (941 aa).

Residues methionine 1–lysine 13 show a composition bias toward basic and acidic residues. A disordered region spans residues methionine 1–glutamine 149. Residues glutamate 14 to aspartate 32 show a composition bias toward acidic residues. Over residues glycine 42–proline 52 the composition is skewed to polar residues. Serine 43 is modified (phosphoserine). Over residues glutamate 55–glutamine 65 the composition is skewed to basic and acidic residues. The span at serine 87 to glutamate 98 shows a compositional bias: acidic residues. A compositionally biased stretch (low complexity) spans aspartate 111–serine 134. Serine 153 carries the phosphoserine modification. The disordered stretch occupies residues arginine 629–serine 713. Low complexity predominate over residues glutamate 671–glutamine 680. Serine 713 bears the Phosphoserine mark. The residue at position 717 (tyrosine 717) is a Phosphotyrosine. At serine 718 the chain carries Phosphoserine. Positions asparagine 724–proline 801 constitute an RRM domain. 3 stretches are compositionally biased toward basic and acidic residues: residues glutamate 862 to aspartate 902, glutamine 913 to glutamate 922, and serine 930 to aspartate 941. The disordered stretch occupies residues glutamate 862–aspartate 941.

It localises to the cytoplasm. Functionally, may be involved in gene regulation during development. Binds RNA. In Drosophila melanogaster (Fruit fly), this protein is RNA-binding protein 4F.